We begin with the raw amino-acid sequence, 51 residues long: Large ribosomal subunit protein eL39 (51 aa).

The protein belongs to the eukaryotic ribosomal protein eL39 family.

The protein is Large ribosomal subunit protein eL39 of Pyrobaculum neutrophilum (strain DSM 2338 / JCM 9278 / NBRC 100436 / V24Sta) (Thermoproteus neutrophilus).